Here is a 291-residue protein sequence, read N- to C-terminus: Phosphatidylserine decarboxylase proenzyme 2 (291 aa).

Residues aspartate 112 and serine 251 each act as charge relay system; for autoendoproteolytic cleavage activity in the active site. Serine 251 (schiff-base intermediate with substrate; via pyruvic acid; for decarboxylase activity) is an active-site residue. Serine 251 carries the pyruvic acid (Ser); by autocatalysis modification.

The protein belongs to the phosphatidylserine decarboxylase family. PSD-B subfamily. Prokaryotic type II sub-subfamily. As to quaternary structure, heterodimer of a large membrane-associated beta subunit and a small pyruvoyl-containing alpha subunit. Pyruvate is required as a cofactor. Post-translationally, is synthesized initially as an inactive proenzyme. Formation of the active enzyme involves a self-maturation process in which the active site pyruvoyl group is generated from an internal serine residue via an autocatalytic post-translational modification. Two non-identical subunits are generated from the proenzyme in this reaction, and the pyruvate is formed at the N-terminus of the alpha chain, which is derived from the carboxyl end of the proenzyme. The autoendoproteolytic cleavage occurs by a canonical serine protease mechanism, in which the side chain hydroxyl group of the serine supplies its oxygen atom to form the C-terminus of the beta chain, while the remainder of the serine residue undergoes an oxidative deamination to produce ammonia and the pyruvoyl prosthetic group on the alpha chain. During this reaction, the Ser that is part of the protease active site of the proenzyme becomes the pyruvoyl prosthetic group, which constitutes an essential element of the active site of the mature decarboxylase.

It is found in the cell membrane. The catalysed reaction is a 1,2-diacyl-sn-glycero-3-phospho-L-serine + H(+) = a 1,2-diacyl-sn-glycero-3-phosphoethanolamine + CO2. Its pathway is phospholipid metabolism; phosphatidylethanolamine biosynthesis; phosphatidylethanolamine from CDP-diacylglycerol: step 2/2. Its function is as follows. Catalyzes the formation of phosphatidylethanolamine (PtdEtn) from phosphatidylserine (PtdSer). This chain is Phosphatidylserine decarboxylase proenzyme 2, found in Clostridium acetobutylicum (strain ATCC 824 / DSM 792 / JCM 1419 / IAM 19013 / LMG 5710 / NBRC 13948 / NRRL B-527 / VKM B-1787 / 2291 / W).